The chain runs to 74 residues: Conotoxin Vc6.11 (74 aa).

Residues 1-19 (MEKLTILLLVAAVLMSTQA) form the signal peptide. Positions 20–41 (LIQEQRQKAKINLFSKRKPSAE) are excised as a propeptide. Disulfide bonds link C55/C66 and C61/C71.

This sequence belongs to the conotoxin O2 superfamily. In terms of tissue distribution, expressed by the venom duct.

Its subcellular location is the secreted. Its function is as follows. Inhibits voltage-gated ion channels. The protein is Conotoxin Vc6.11 of Conus victoriae (Queen Victoria cone).